The following is a 383-amino-acid chain: Xylose/arabinose import ATP-binding protein XacJ (383 aa).

An ABC transporter domain is found at 4-235 (IQLTDLTKRF…PNNLFVAEFI (232 aa)). 36-43 (GPSGCGKS) provides a ligand contact to ATP.

This sequence belongs to the ABC transporter superfamily. Carbohydrate uptake transporter-1 (CUT1) (TC 3.A.1.1) family. In terms of assembly, the complex is composed of two ATP-binding proteins (XacJ and XacK), two transmembrane proteins (XacH and XacI) and a solute-binding protein (XacG).

The protein resides in the cell membrane. It carries out the reaction D-xylose(out) + ATP + H2O = D-xylose(in) + ADP + phosphate + H(+). The enzyme catalyses L-arabinose(out) + ATP + H2O = L-arabinose(in) + ADP + phosphate + H(+). Part of the ABC transporter complex XacGHIJK involved in the uptake of xylose and arabinose. Responsible for energy coupling to the transport system. In Haloferax volcanii (strain ATCC 29605 / DSM 3757 / JCM 8879 / NBRC 14742 / NCIMB 2012 / VKM B-1768 / DS2) (Halobacterium volcanii), this protein is Xylose/arabinose import ATP-binding protein XacJ.